Here is a 116-residue protein sequence, read N- to C-terminus: Tachykinin-3 (116 aa).

A signal peptide spans 1–20; it reads MRSAMLFAAVLALSLAWTFG. Residues 21–79 constitute a propeptide that is removed on maturation; the sequence is AVCEEPQGQGGRLSKDSDLYQLPPSLLRRLYDSRPVSLEGLLKVLSKASVGPKETSLPQ. M91 carries the post-translational modification Methionine amide. Residues 93–116 form a disordered region; sequence KRNSQPDTPTDVVEENTPSFGILK. A propeptide spanning residues 95–116 is cleaved from the precursor; that stretch reads NSQPDTPTDVVEENTPSFGILK.

The protein belongs to the tachykinin family.

It localises to the secreted. Functionally, tachykinins are active peptides which excite neurons, evoke behavioral responses, are potent vasodilators and secretagogues, and contract (directly or indirectly) many smooth muscles. Is a critical central regulator of gonadal function. This is Tachykinin-3 (Tac3) from Mus musculus (Mouse).